The primary structure comprises 374 residues: Ribosomal RNA large subunit methyltransferase G (374 aa).

The protein belongs to the methyltransferase superfamily. RlmG family.

The protein localises to the cytoplasm. The catalysed reaction is guanosine(1835) in 23S rRNA + S-adenosyl-L-methionine = N(2)-methylguanosine(1835) in 23S rRNA + S-adenosyl-L-homocysteine + H(+). In terms of biological role, specifically methylates the guanine in position 1835 (m2G1835) of 23S rRNA. This chain is Ribosomal RNA large subunit methyltransferase G, found in Pseudomonas putida (strain ATCC 700007 / DSM 6899 / JCM 31910 / BCRC 17059 / LMG 24140 / F1).